The sequence spans 510 residues: MSKKPVALIILDGFALRDEDKGNAVTHAKKPNFDRFWNEYPHATLQASGEAVGLPEGQMGNSEVGHLNIGAGRIVYQSLTRVNVAIREGEFEQNETLLAAVKHAKEKGTNLHLFGLLSDGGVHSHIEHLYALLRLAKSEGLEKVYIHGFLDGRDVAPQSAETYLKELNEKIEEYGVGEIATLSGRYYSMDRDKRWERVEKSYRAMVYGEGPSYTSAEECVKDSYENGIYDEFVLPSVITKEDGSPVATIQDEDAVIFYNFRPDRAIQISNTFANEDFRSFDRGEKHPKNLHFVCLTHFSETVDGYVAFKPNNLDNTLGEVLSQNNLKQLRIAETEKYPHVTFFMSGGREAEFPGETRILIDSPKVATYDLKPEMSAYEVTDALLAEIEGDKQDAILLNFANPDMVGHSGMLEPTVKAIETVDECLGKIVDAILAKGGTAIITADHGNADEVITLEGNPMTAHTTNPVPVIVTKQGLELREDGILGDLAPTMLTLLDVAQPKEMTGKTLIK.

The Mn(2+) site is built by D12 and S62. S62 (phosphoserine intermediate) is an active-site residue. Residues H123, 153-154 (RD), R185, R191, 261-264 (RPDR), and K336 contribute to the substrate site. Mn(2+) contacts are provided by D403, H407, D444, H445, and H462.

This sequence belongs to the BPG-independent phosphoglycerate mutase family. As to quaternary structure, monomer. Mn(2+) is required as a cofactor.

It catalyses the reaction (2R)-2-phosphoglycerate = (2R)-3-phosphoglycerate. It participates in carbohydrate degradation; glycolysis; pyruvate from D-glyceraldehyde 3-phosphate: step 3/5. Functionally, essential for rapid growth and for sporulation. Catalyzes the interconversion of 2-phosphoglycerate and 3-phosphoglycerate. The chain is 2,3-bisphosphoglycerate-independent phosphoglycerate mutase from Priestia megaterium (strain DSM 319 / IMG 1521) (Bacillus megaterium).